Here is a 299-residue protein sequence, read N- to C-terminus: Sulfotransferase 1B1 (299 aa).

Residue 48–53 (KSGTTW) participates in 3'-phosphoadenylyl sulfate binding. 107 to 109 (KTH) is a substrate binding site. Histidine 109 functions as the Proton acceptor in the catalytic mechanism. 3'-phosphoadenylyl sulfate contacts are provided by residues arginine 131, serine 139, tyrosine 194, 228-233 (TSFEMM), and 258-260 (RKG).

It belongs to the sulfotransferase 1 family. Liver specific.

The protein localises to the cytoplasm. The catalysed reaction is a phenol + 3'-phosphoadenylyl sulfate = an aryl sulfate + adenosine 3',5'-bisphosphate + H(+). It carries out the reaction 3,3',5-triiodo-L-thyronine + 3'-phosphoadenylyl sulfate = 3,3',5-triiodo-L-thyronine sulfate + adenosine 3',5'-bisphosphate + H(+). It catalyses the reaction 3,3',5'-triiodo-L-thyronine + 3'-phosphoadenylyl sulfate = 3,3',5'-triiodo-L-thyronine sulfate + adenosine 3',5'-bisphosphate + H(+). The enzyme catalyses 3,3'-diiodo-L-thyronine + 3'-phosphoadenylyl sulfate = 3,3'-diiodo-L-thyronine sulfate + adenosine 3',5'-bisphosphate + H(+). The catalysed reaction is dopamine + 3'-phosphoadenylyl sulfate = dopamine 3-O-sulfate + adenosine 3',5'-bisphosphate + H(+). It carries out the reaction dopamine + 3'-phosphoadenylyl sulfate = dopamine 4-O-sulfate + adenosine 3',5'-bisphosphate + H(+). It catalyses the reaction 4-ethylphenol + 3'-phosphoadenylyl sulfate = 4-ethylphenyl sulfate + adenosine 3',5'-bisphosphate + H(+). Its function is as follows. Sulfotransferase that utilizes 3'-phospho-5'-adenylyl sulfate (PAPS) as sulfonate donor to catalyze the sulfate conjugation of dopamine, small phenols such as 1-naphthol and p-nitrophenol and thyroid hormones, including 3,3'-diiodothyronine, triidothyronine (T3) and reverse triiodothyronine (rT3). May play a role in gut microbiota-host metabolic interaction. O-sulfonates 4-ethylphenol (4-EP), a dietary tyrosine-derived metabolite produced by gut bacteria. The product 4-EPS crosses the blood-brain barrier and may negatively regulate oligodendrocyte maturation and myelination, affecting the functional connectivity of different brain regions associated with the limbic system. The protein is Sulfotransferase 1B1 of Mus musculus (Mouse).